Consider the following 1410-residue polypeptide: Slit homolog 1 protein (1410 aa).

The signal sequence occupies residues 1 to 16 (MLICFIFILLIPESAT). In terms of domain architecture, LRRNT 1 spans 17-43 (CPAECVCVDRTVSCVGQQLTEVPQNIP). 20 LRR repeats span residues 22–42 (VCVDRTVSCVGQQLTEVPQNI), 43–66 (PNDTIRLDLQDNEITKIGPNDFSS), 67–90 (LMNLKALQLMDNQIVTIHNQSFSS), 91–114 (LVFLQKLRLSRNRIRHLPDNVFQN), 116–138 (LKLTHLDLSENDITVVSDAQLQG), 140–162 (EFLEVLNLDKNHIFCLENNVISS), 163–186 (WVSLEVLTLNGNRLTTFEEPSNAR), 219–242 (TVCATPLNLQGSSIEILQDKFMTC), 286–309 (PPSTTEIRLEQNQISSIPSHSFKN), 310–333 (LKNLTRLDLSKNIITEIQPKAFLG), 335–357 (HNLHTLVLYGNNITDLKSDTFEG), 358–381 (LGSLQLLLLNANQLTCIRRGTFDH), 383–405 (PKLSMLSLYDNDIKSISEVTFQN), 407–430 (TSLSTLHLAKNPLICDCNLQWLAQ), 442–465 (ARCEQPKRLRKKKFATLPPNKFKC), 489–510 (CDCYGTTVDCNKRGLNTIPTSI), 511–535 (PRFATQLLLSGNNISTVDLNSNIHV), 536–559 (LENLEVLDLSNNHITFINDKSFEK), 561–583 (SKLRELRLNDNKLHHFSSMVLDE), and 585–607 (SNLEILDLSGNNIQCFSSIFFNK). The 49-residue stretch at 195-243 (NPWNCDCRLRWMRKWLEKAEGQNKTVCATPLNLQGSSIEILQDKFMTCS) folds into the LRRCT 1 domain. One can recognise an LRRNT 2 domain in the interval 259-286 (ICPLPCTCTGTTVDCRDSGLTYVPTNLP). The region spanning 417–466 (NPLICDCNLQWLAQINLQKNIETSGARCEQPKRLRKKKFATLPPNKFKCK) is the LRRCT 2 domain. The LRRNT 3 domain maps to 484–511 (ICPTQCDCYGTTVDCNKRGLNTIPTSIP). The region spanning 619 to 671 (NDLLCDCRILPLMSWLRSNSSHSIDIPPCQQFQYSDNESDKQRCAAFPEETCS) is the LRRCT 3 domain. In terms of domain architecture, LRRNT 4 spans 677–703 (CPPKCSCLDRVVRCSNKNLTSFPSRIP). LRR repeat units lie at residues 681–703 (CSCLDRVVRCSNKNLTSFPSRIP), 704–726 (FDTTELYLDANYINEIPAHDLNR), 727–750 (LYSLTKLDLSHNRLISLENNTFSN), 752–774 (TRLSTLIISYNKLRCLQPLAFNG), 775–798 (LNALRILSLHGNDISFLPQSAFSN), and 800–823 (TSITHIAVGSNSLYCDCNMAWFSK). The LRRCT 4 domain occupies 810–859 (NSLYCDCNMAWFSKWIKSKFIEAGIARCEYPNTVSNQLLLTAQPYQFTCD). EGF-like domains lie at 871–906 (DLCLNSPCKNNAICETTSSRKYTCNCTPGFYGVHCE) and 908–945 (QIDACYGSPCLNNATCKVAQAGRFNCYCNKGFEGDYCE). 18 disulfide bridges follow: Cys873–Cys884, Cys878–Cys894, Cys896–Cys905, Cys912–Cys923, Cys917–Cys933, Cys935–Cys944, Cys951–Cys962, Cys956–Cys971, Cys973–Cys982, Cys989–Cys1002, Cys996–Cys1011, Cys1013–Cys1022, Cys1029–Cys1040, Cys1034–Cys1049, Cys1051–Cys1060, Cys1076–Cys1086, Cys1081–Cys1097, and Cys1099–Cys1108. Residues 947–983 (NIDDCVNSKCENGGKCVDLINSYRCDCPMEYEGKHCE) form the EGF-like 1; calcium-binding domain. Residues 985–1023 (KLEYCTKKLNPCENNGKCIPINGSYSCMCSPGFTGNNCE) enclose the EGF-like 3 domain. The 37-residue stretch at 1025-1061 (NIDDCKNVECQNGGSCVDGILSYDCLCRPGYAGQYCE) folds into the EGF-like 2; calcium-binding domain. In terms of domain architecture, EGF-like 4 spans 1072–1109 (KTDACQQSACGQGECVASQNSSDFTCKCHEGFSGPSCD). The 174-residue stretch at 1112–1285 (MSVGFKNPGA…LENVNTEQSC (174 aa)) folds into the Laminin G-like domain. Residues 1197–1221 (TSERKCFLQIDKNPVQIVENSGKSD) form an LRR 27 repeat. Cystine bridges form between Cys1259–Cys1285, Cys1292–Cys1302, Cys1297–Cys1314, Cys1316–Cys1325, Cys1332–Cys1368, Cys1346–Cys1382, Cys1357–Cys1398, and Cys1361–Cys1400. The EGF-like 5 domain maps to 1288 to 1326 (TVNFCAGIDCGNGKCTNNALSPKGYMCQCDSHFSGEHCD). Residues 1332–1406 (CDKQKFRRHH…QCQCEPTKSV (75 aa)) form the CTCK domain.

As to quaternary structure, interacts with eva-1.

It localises to the secreted. Functions as a ligand for sax-3 receptor during larval development. Acts via the sax-3/Robo receptor to direct ventral axon guidance and guidance at the midline during embryonic development. This Caenorhabditis elegans protein is Slit homolog 1 protein (slt-1).